A 925-amino-acid chain; its full sequence is Isoleucine--tRNA ligase (925 aa).

The 'HIGH' region motif lies at 57–67 (PYANGDIHMGH). Glu556 contacts L-isoleucyl-5'-AMP. A 'KMSKS' region motif is present at residues 597 to 601 (KMSKS). Lys600 serves as a coordination point for ATP. Positions 890, 893, 910, and 913 each coordinate Zn(2+).

It belongs to the class-I aminoacyl-tRNA synthetase family. IleS type 1 subfamily. In terms of assembly, monomer. Zn(2+) is required as a cofactor.

It localises to the cytoplasm. It catalyses the reaction tRNA(Ile) + L-isoleucine + ATP = L-isoleucyl-tRNA(Ile) + AMP + diphosphate. In terms of biological role, catalyzes the attachment of isoleucine to tRNA(Ile). As IleRS can inadvertently accommodate and process structurally similar amino acids such as valine, to avoid such errors it has two additional distinct tRNA(Ile)-dependent editing activities. One activity is designated as 'pretransfer' editing and involves the hydrolysis of activated Val-AMP. The other activity is designated 'posttransfer' editing and involves deacylation of mischarged Val-tRNA(Ile). In Carboxydothermus hydrogenoformans (strain ATCC BAA-161 / DSM 6008 / Z-2901), this protein is Isoleucine--tRNA ligase.